Reading from the N-terminus, the 293-residue chain is Protease HtpX (293 aa).

A run of 2 helical transmembrane segments spans residues 2-22 (FRIL…SVTL) and 38-58 (LTSL…ISLF). Residue H145 participates in Zn(2+) binding. The active site involves E146. A Zn(2+)-binding site is contributed by H149. 2 helical membrane passes run 156–176 (VTLA…ARII) and 193–213 (IGFF…ASII). E222 provides a ligand contact to Zn(2+).

It belongs to the peptidase M48B family. It depends on Zn(2+) as a cofactor.

The protein resides in the cell inner membrane. The chain is Protease HtpX from Hahella chejuensis (strain KCTC 2396).